Here is a 712-residue protein sequence, read N- to C-terminus: MVRPNNNQLPENLPQLQNLIKRDPESYSDEFHIQYQHFLSLLEVFALNPSEENKSLDDIVMFVAQVAQCYPAVCEEFPKRLSDLLKNYATVLDPAMRNCFVKALILLRNKNLVPALDILELFFQLLRCPDKNLRTFLQTHIVTDIKNMNAKHKDMKLNSSLQAFMYSMLKDANPKAAKMSADIMIELYKKNIWNDSKTVNVIATVGCFSKVTKVLVTSLKFFLGHDEEDEEEDTDSENEVDLKGALMANRVNKKTKKRTKQLAQIKKQAVKAQKKKKNAPAFNFSGIHLVHNPQGMAEGLFKQLQATNERFEVKLMHLDVISRLIGIHDLFLFGFYPYITRFLQPHQRQVTRVLQFAAQASHELVPGDIIEPILKTIANNFITERNSSDVMAIGLNATREICMRCPLAMGEDLLQDLAMYKTYKEKSVMMAARSLITLYREQLPALLHKKDRGRQTEAQAERKVRAYGEREVHDTVLGAEALLKDSKTIDIESEDDTDSNDGEWVNVAHSDGEGGGADDDEEDEDEDEDDDDEDEDEENSNDEENEDEDNSDEGVESGEESAKAKKEKKDMRILNQKEAAQELALTRIFTDEDFKRINAANLKKTVTSARKRPLEQDRAEFVKLNSIEMIYKKRKHDKESRLETVQAGRQDRERFGWKDGRVNEHCSKTNREKRKTKNFGMLRHKARSKVKKSFKDKQQALRKHLLHQKKMK.

Phosphothreonine is present on Thr234. A Phosphoserine modification is found at Ser236. Disordered regions lie at residues 488 to 573 (TIDI…DMRI) and 662 to 712 (VNEH…KKMK). Acidic residues-rich tracts occupy residues 491–501 (IESEDDTDSND) and 516–559 (GADD…ESGE). A compositionally biased stretch (basic and acidic residues) spans 560 to 572 (ESAKAKKEKKDMR). Basic residues-rich tracts occupy residues 671 to 692 (REKRKTKNFGMLRHKARSKVKK) and 700 to 712 (ALRKHLLHQKKMK).

The protein belongs to the SDA1 family.

It is found in the nucleus. It localises to the nucleolus. Functionally, required for 60S pre-ribosomal subunits export to the cytoplasm. This Drosophila melanogaster (Fruit fly) protein is Protein SDA1 homolog (Mys45A).